The chain runs to 172 residues: RNA pyrophosphohydrolase (172 aa).

The 144-residue stretch at 6 to 149 (GFRANVGIII…KRDVYRKVMK (144 aa)) folds into the Nudix hydrolase domain. Positions 38 to 59 (GGLDDGESVEEAMYRELYEEVG) match the Nudix box motif.

It belongs to the Nudix hydrolase family. RppH subfamily. It depends on a divalent metal cation as a cofactor.

Functionally, accelerates the degradation of transcripts by removing pyrophosphate from the 5'-end of triphosphorylated RNA, leading to a more labile monophosphorylated state that can stimulate subsequent ribonuclease cleavage. The polypeptide is RNA pyrophosphohydrolase (Shewanella frigidimarina (strain NCIMB 400)).